A 184-amino-acid polypeptide reads, in one-letter code: Large ribosomal subunit protein uL6 (184 aa).

This sequence belongs to the universal ribosomal protein uL6 family. Part of the 50S ribosomal subunit.

Its function is as follows. This protein binds to the 23S rRNA, and is important in its secondary structure. It is located near the subunit interface in the base of the L7/L12 stalk, and near the tRNA binding site of the peptidyltransferase center. This is Large ribosomal subunit protein uL6 from Aster yellows witches'-broom phytoplasma (strain AYWB).